Consider the following 376-residue polypeptide: Succinyl-diaminopimelate desuccinylase (376 aa).

H67 contributes to the Zn(2+) binding site. D69 is a catalytic residue. D100 serves as a coordination point for Zn(2+). Catalysis depends on E134, which acts as the Proton acceptor. Zn(2+)-binding residues include E135, E163, and H349.

Belongs to the peptidase M20A family. DapE subfamily. As to quaternary structure, homodimer. The cofactor is Zn(2+). Co(2+) is required as a cofactor.

The catalysed reaction is N-succinyl-(2S,6S)-2,6-diaminopimelate + H2O = (2S,6S)-2,6-diaminopimelate + succinate. It participates in amino-acid biosynthesis; L-lysine biosynthesis via DAP pathway; LL-2,6-diaminopimelate from (S)-tetrahydrodipicolinate (succinylase route): step 3/3. Functionally, catalyzes the hydrolysis of N-succinyl-L,L-diaminopimelic acid (SDAP), forming succinate and LL-2,6-diaminopimelate (DAP), an intermediate involved in the bacterial biosynthesis of lysine and meso-diaminopimelic acid, an essential component of bacterial cell walls. The chain is Succinyl-diaminopimelate desuccinylase from Shewanella denitrificans (strain OS217 / ATCC BAA-1090 / DSM 15013).